The following is a 187-amino-acid chain: Meiotically up-regulated gene 155 protein (187 aa).

The segment at 1–24 (MRPTSGCSKDDTIQKQNRRHNTVD) is disordered. The next 2 membrane-spanning stretches (helical) occupy residues 83 to 105 (IISY…PFSH) and 163 to 183 (VMLT…LFIF).

The protein resides in the cytoplasm. It is found in the nucleus membrane. In terms of biological role, has a role in meiosis. The sequence is that of Meiotically up-regulated gene 155 protein (mug155) from Schizosaccharomyces pombe (strain 972 / ATCC 24843) (Fission yeast).